Here is a 314-residue protein sequence, read N- to C-terminus: tRNA dimethylallyltransferase (314 aa).

Position 15-22 (15-22 (GPTATGKS)) interacts with ATP. A substrate-binding site is contributed by 17–22 (TATGKS). The interval 40–43 (DSML) is interaction with substrate tRNA.

It belongs to the IPP transferase family. Monomer. The cofactor is Mg(2+).

The enzyme catalyses adenosine(37) in tRNA + dimethylallyl diphosphate = N(6)-dimethylallyladenosine(37) in tRNA + diphosphate. Its function is as follows. Catalyzes the transfer of a dimethylallyl group onto the adenine at position 37 in tRNAs that read codons beginning with uridine, leading to the formation of N6-(dimethylallyl)adenosine (i(6)A). The chain is tRNA dimethylallyltransferase from Pelotomaculum thermopropionicum (strain DSM 13744 / JCM 10971 / SI).